An 877-amino-acid polypeptide reads, in one-letter code: DNA mismatch repair protein MutS (877 aa).

Residue 627–634 coordinates ATP; sequence GPNMAGKS.

The protein belongs to the DNA mismatch repair MutS family.

In terms of biological role, this protein is involved in the repair of mismatches in DNA. It is possible that it carries out the mismatch recognition step. This protein has a weak ATPase activity. In Dinoroseobacter shibae (strain DSM 16493 / NCIMB 14021 / DFL 12), this protein is DNA mismatch repair protein MutS.